Reading from the N-terminus, the 1235-residue chain is DNA polymerase catalytic subunit (1235 aa).

Disordered regions lie at residues 640-693 (QGRF…AGRH) and 1098-1134 (AAAPGDEPAPPAALPSPAKRPRETPSHADPPGGASKP). Basic and acidic residues predominate over residues 650–661 (APKRPAAAREDE). The span at 662–675 (ERPEEEGEDEDERE) shows a compositional bias: acidic residues. Positions 676–691 (EGGGEREPEGARETAG) are enriched in basic and acidic residues.

It belongs to the DNA polymerase type-B family. As to quaternary structure, forms a complex with the ssDNA-binding protein UL29, the DNA polymerase processivity factor, and the alkaline exonuclease. Interacts with the putative helicase-primase complex subunit UL8; this interaction may coordinate leading and lagging strand DNA synthesis at the replication fork.

It localises to the host nucleus. It catalyses the reaction DNA(n) + a 2'-deoxyribonucleoside 5'-triphosphate = DNA(n+1) + diphosphate. The catalysed reaction is Endonucleolytic cleavage to 5'-phosphomonoester.. Replicates viral genomic DNA. The replication complex is composed of six viral proteins: the DNA polymerase, processivity factor, primase, primase-associated factor, helicase, and ssDNA-binding protein. Additionally, the polymerase contains an intrinsic ribonuclease H (RNase H) activity that specifically degrades RNA/DNA heteroduplexes or duplex DNA substrates in the 5' to 3' direction. Therefore, it can catalyze the excision of the RNA primers that initiate the synthesis of Okazaki fragments at a replication fork during viral DNA replication. This Human herpesvirus 1 (strain KOS) (HHV-1) protein is DNA polymerase catalytic subunit.